Here is a 134-residue protein sequence, read N- to C-terminus: Replication enhancer protein (134 aa).

This sequence belongs to the geminiviridae replication enhancer protein family. In terms of assembly, homooligomer. Interacts with the replication-associated protein (REP). Interacts with host proliferating cell nuclear antigen (PCNA). Interacts with host retinoblastoma-related protein 1 (RBR1), and may thereby deregulate the host cell cycle. Oligomerization and interaction with PCNA are necessary for optimal replication enhancement.

Functionally, increases viral DNA accumulation. Enhances infectivity and symptom expression. The polypeptide is Replication enhancer protein (Cynanchum acutum (Tomato)).